A 113-amino-acid chain; its full sequence is Small ribosomal subunit protein bS6 (113 aa).

This sequence belongs to the bacterial ribosomal protein bS6 family.

Its function is as follows. Binds together with bS18 to 16S ribosomal RNA. This chain is Small ribosomal subunit protein bS6, found in Wigglesworthia glossinidia brevipalpis.